Consider the following 216-residue polypeptide: MSETTHTAIDTAYPGNLFMVVAPSGAGKSTLVNALLAQDKAIRLSISHTTRSPRPGEQNGREYHFISVDEFRAARDRGEFLEWAEVHGNYYATSRVWIEEQMAQGTDVLLEIDWQGAQQVHKRFSNAVEIFILPPSLTALEERLKKRGQDEPNVIVRRLLAAGSEMSHASESDYVIINEVFDDALKQLQNVVHATRLRFSSQKARHAELFIELGIH.

The 179-residue stretch at 15 to 193 (GNLFMVVAPS…ALKQLQNVVH (179 aa)) folds into the Guanylate kinase-like domain. 22-29 (APSGAGKS) is a binding site for ATP.

The protein belongs to the guanylate kinase family.

It is found in the cytoplasm. The enzyme catalyses GMP + ATP = GDP + ADP. In terms of biological role, essential for recycling GMP and indirectly, cGMP. The chain is Guanylate kinase from Cupriavidus metallidurans (strain ATCC 43123 / DSM 2839 / NBRC 102507 / CH34) (Ralstonia metallidurans).